Reading from the N-terminus, the 1224-residue chain is Serine/threonine-protein kinase CST20 (1224 aa).

Polar residues predominate over residues 1–18; that stretch reads MSILSENNPTPTSITDPN. Disordered stretches follow at residues 1 to 378 and 403 to 464; these read MSIL…TAHN and TNSS…HSQE. Composition is skewed to low complexity over residues 57–70 and 95–119; these read NTTSANTSSLSLGS and DSGSGDIDDSQQSHNNNNNESNPES. Residues 144-155 are compositionally biased toward basic and acidic residues; that stretch reads HQGDDSDNEKQY. Composition is skewed to polar residues over residues 169–191, 201–218, and 231–240; these read DSYSLGTLESPGTLNALETNNVS, TSSLEDLSLSLQHQNENA, and PTSKTSSFHD. The segment covering 242–251 has biased composition (low complexity); that stretch reads SSVISSSTSV. 2 stretches are compositionally biased toward polar residues: residues 256–271 and 305–324; these read SNPTSTRGSHLSSYKS and DTLSSATNSPNLLRNDTLQG. Composition is skewed to low complexity over residues 343–375 and 433–462; these read NTSATSRNTSGTSTSTVVKNSRSGTSKSTSTST and KVRGVFSSMFGKNKSTSSSSSSNSGSNSHS. One can recognise a CRIB domain in the interval 469-482; that stretch reads ISTPFNAKHLAHVG. 2 disordered regions span residues 539 to 825 and 861 to 913; these read FHFD…ALAD and LREK…KQAA. Residues 544–555 show a composition bias toward polar residues; sequence NKSSSSGWSNEN. The segment covering 564 to 575 has biased composition (gly residues); it reads SNSGSGSGGGGA. Residues 598-607 show a composition bias toward polar residues; that stretch reads ITPSQSMPTK. Over residues 608–622 the composition is skewed to basic and acidic residues; it reads TESKQSENQHPHEDN. Positions 623–636 are enriched in polar residues; the sequence is ATQYTPRTPTSHVQ. Composition is skewed to low complexity over residues 664 to 677, 690 to 704, and 730 to 743; these read PSSQSLPRSDSQSD, SPSKIKIRSISSKSL, and SIPKSKSHSASLSS. Over residues 744 to 755 the composition is skewed to polar residues; that stretch reads QLRPATNGSTTA. The segment covering 783 to 801 has biased composition (pro residues); sequence APPPPPSAPPAPPVPPAPP. A compositionally biased stretch (polar residues) spans 805-820; it reads LSEQTSEIPQQRTAPS. Over residues 861 to 870 the composition is skewed to basic and acidic residues; sequence LREKNERQNR. The span at 871–886 shows a compositional bias: polar residues; the sequence is QQETGQNNADTASGGS. One can recognise a Protein kinase domain in the interval 947–1199; that stretch reads YVDLVKIGQG…ADELLHDNFI (253 aa). ATP contacts are provided by residues 953–961 and Lys977; that span reads IGQGASGGV. Asp1067 (proton acceptor) is an active-site residue.

The protein belongs to the protein kinase superfamily. STE Ser/Thr protein kinase family. STE20 subfamily.

Its subcellular location is the cytoplasm. The protein localises to the nucleus. The enzyme catalyses L-seryl-[protein] + ATP = O-phospho-L-seryl-[protein] + ADP + H(+). It carries out the reaction L-threonyl-[protein] + ATP = O-phospho-L-threonyl-[protein] + ADP + H(+). In terms of biological role, MAP4K component of the MAPK pathway required for the mating pheromone response, and the regulation of cell polarity and cell cycle. Phosphorylates histone H2B to form H2BS10ph. Required for hyphal formation and virulence. In Candida albicans (strain WO-1) (Yeast), this protein is Serine/threonine-protein kinase CST20 (CST20).